The primary structure comprises 158 residues: MAEQATKSVLFVCLGNICRSPIAEAVFRKLVTDQNISENWRVDSAATSGYEIGNPPDYRGQSCMKRHGIPMSHVARQITKEDFATFDYILCMDESNLRDLNRKSNQVKTCKAKIELLGSYDPQKQLIIEDPYYGNDSDFETVYQQCVRCCRAFLEKAH.

N-acetylalanine is present on Ala-2. Cys-13 (nucleophile) is an active-site residue. Arg-19 is an active-site residue. The Proton donor role is filled by Asp-130. Phosphotyrosine is present on residues Tyr-132 and Tyr-133.

The protein belongs to the low molecular weight phosphotyrosine protein phosphatase family. In terms of assembly, interacts with EPHA2; dephosphorylates EPHA2. Interacts with EPHB1. Interacts with the SH3 domain of SPTAN1. There is no interaction observed for isoforms 2 or 3. Post-translationally, phosphorylated by LCK. Phosphorylation at Tyr-132 increases its phosphatase activity. Not phosphorylated. As to expression, expressed in T-lymphocytes.

It is found in the cytoplasm. The enzyme catalyses O-phospho-L-tyrosyl-[protein] + H2O = L-tyrosyl-[protein] + phosphate. It catalyses the reaction a phosphate monoester + H2O = an alcohol + phosphate. Its activity is regulated as follows. Inhibited by sulfhydryl reagents. Its function is as follows. Acts on tyrosine phosphorylated proteins, low-MW aryl phosphates and natural and synthetic acyl phosphates with differences in substrate specificity between isoform 1 and isoform 2. Functionally, does not possess phosphatase activity. The polypeptide is Low molecular weight phosphotyrosine protein phosphatase (Homo sapiens (Human)).